The sequence spans 147 residues: 3-dehydroquinate dehydratase (147 aa).

Residue Y23 is the Proton acceptor of the active site. Residues N74, H80, and D87 each contribute to the substrate site. The Proton donor role is filled by H100. Substrate-binding positions include 101–102 and R111; that span reads LS.

It belongs to the type-II 3-dehydroquinase family. As to quaternary structure, homododecamer.

The catalysed reaction is 3-dehydroquinate = 3-dehydroshikimate + H2O. It participates in metabolic intermediate biosynthesis; chorismate biosynthesis; chorismate from D-erythrose 4-phosphate and phosphoenolpyruvate: step 3/7. Catalyzes a trans-dehydration via an enolate intermediate. This Glaesserella parasuis serovar 5 (strain SH0165) (Haemophilus parasuis) protein is 3-dehydroquinate dehydratase.